The sequence spans 222 residues: MIF4G domain-containing protein (222 aa).

The region spanning 3–205 is the MIF4G domain; the sequence is EPSKEEYKIQ…LEIIEFRAAG (203 aa).

It belongs to the MIF4GD family. In terms of assembly, interacts with EIF4G1, EIF4G2 and SLBP; probably tethered by SLBP to the 3'-end of mRNAs ending with the histone stem-loop, it also interacts with EIF4G1 which is bound to their 5'-end.

The protein resides in the cytoplasm. The protein localises to the nucleus. In terms of biological role, functions in replication-dependent translation of histone mRNAs which differ from other eukaryotic mRNAs in that they do not end with a poly-A tail but a stem-loop. May participate in circularizing those mRNAs specifically enhancing their translation. The polypeptide is MIF4G domain-containing protein (MIF4GD) (Bos taurus (Bovine)).